Here is a 632-residue protein sequence, read N- to C-terminus: MAU2 chromatid cohesion factor homolog (632 aa).

TPR repeat units lie at residues 453–486 (GGFY…ANAE) and 493–526 (SCSL…ASKI).

This sequence belongs to the SCC4/mau-2 family. As to quaternary structure, interacts with Nipped-B to form the cohesin loading complex.

Its subcellular location is the nucleus. It is found in the nucleoplasm. Functionally, required for association of the cohesin complex with chromatin during interphase. Plays a role in sister chromatid cohesion and normal progression through prometaphase. This Drosophila yakuba (Fruit fly) protein is MAU2 chromatid cohesion factor homolog.